The following is a 478-amino-acid chain: ATP synthase subunit beta (478 aa).

164–171 serves as a coordination point for ATP; the sequence is GGAGVGKT.

It belongs to the ATPase alpha/beta chains family. As to quaternary structure, F-type ATPases have 2 components, CF(1) - the catalytic core - and CF(0) - the membrane proton channel. CF(1) has five subunits: alpha(3), beta(3), gamma(1), delta(1), epsilon(1). CF(0) has three main subunits: a(1), b(2) and c(9-12). The alpha and beta chains form an alternating ring which encloses part of the gamma chain. CF(1) is attached to CF(0) by a central stalk formed by the gamma and epsilon chains, while a peripheral stalk is formed by the delta and b chains.

The protein localises to the cell membrane. It catalyses the reaction ATP + H2O + 4 H(+)(in) = ADP + phosphate + 5 H(+)(out). Its function is as follows. Produces ATP from ADP in the presence of a proton gradient across the membrane. The catalytic sites are hosted primarily by the beta subunits. The sequence is that of ATP synthase subunit beta from Streptomyces avermitilis (strain ATCC 31267 / DSM 46492 / JCM 5070 / NBRC 14893 / NCIMB 12804 / NRRL 8165 / MA-4680).